Here is a 551-residue protein sequence, read N- to C-terminus: ATP synthase subunit alpha (551 aa).

174-181 (GDRQTGKT) provides a ligand contact to ATP.

It belongs to the ATPase alpha/beta chains family. F-type ATPases have 2 components, CF(1) - the catalytic core - and CF(0) - the membrane proton channel. CF(1) has five subunits: alpha(3), beta(3), gamma(1), delta(1), epsilon(1). CF(0) has three main subunits: a(1), b(2) and c(9-12). The alpha and beta chains form an alternating ring which encloses part of the gamma chain. CF(1) is attached to CF(0) by a central stalk formed by the gamma and epsilon chains, while a peripheral stalk is formed by the delta and b chains.

The protein resides in the cell inner membrane. It carries out the reaction ATP + H2O + 4 H(+)(in) = ADP + phosphate + 5 H(+)(out). Produces ATP from ADP in the presence of a proton gradient across the membrane. The alpha chain is a regulatory subunit. The chain is ATP synthase subunit alpha from Salinibacter ruber (strain DSM 13855 / M31).